The primary structure comprises 320 residues: tRNA pseudouridine synthase B (320 aa).

Asp48 (nucleophile) is an active-site residue.

This sequence belongs to the pseudouridine synthase TruB family. Type 1 subfamily.

It catalyses the reaction uridine(55) in tRNA = pseudouridine(55) in tRNA. Its function is as follows. Responsible for synthesis of pseudouridine from uracil-55 in the psi GC loop of transfer RNAs. In Mycobacterium leprae (strain TN), this protein is tRNA pseudouridine synthase B.